The following is a 417-amino-acid chain: Queuine tRNA-ribosyltransferase accessory subunit 2 (417 aa).

The Zn(2+) site is built by Cys-324, Cys-326, Cys-329, and His-355.

Belongs to the queuine tRNA-ribosyltransferase family. QTRT2 subfamily. As to quaternary structure, heterodimer of a catalytic subunit and an accessory subunit. The cofactor is Zn(2+).

Its subcellular location is the cytoplasm. Its function is as follows. Non-catalytic subunit of the queuine tRNA-ribosyltransferase (TGT) that catalyzes the base-exchange of a guanine (G) residue with queuine (Q) at position 34 (anticodon wobble position) in tRNAs with GU(N) anticodons (tRNA-Asp, -Asn, -His and -Tyr), resulting in the hypermodified nucleoside queuosine (7-(((4,5-cis-dihydroxy-2-cyclopenten-1-yl)amino)methyl)-7-deazaguanosine). The polypeptide is Queuine tRNA-ribosyltransferase accessory subunit 2 (Drosophila persimilis (Fruit fly)).